The following is a 278-amino-acid chain: Hydroxyethylthiazole kinase (278 aa).

Position 46 (methionine 46) interacts with substrate. ATP-binding residues include arginine 122 and threonine 168. Residue glycine 195 coordinates substrate.

Belongs to the Thz kinase family. Requires Mg(2+) as cofactor.

The enzyme catalyses 5-(2-hydroxyethyl)-4-methylthiazole + ATP = 4-methyl-5-(2-phosphooxyethyl)-thiazole + ADP + H(+). Its pathway is cofactor biosynthesis; thiamine diphosphate biosynthesis; 4-methyl-5-(2-phosphoethyl)-thiazole from 5-(2-hydroxyethyl)-4-methylthiazole: step 1/1. In terms of biological role, catalyzes the phosphorylation of the hydroxyl group of 4-methyl-5-beta-hydroxyethylthiazole (THZ). The chain is Hydroxyethylthiazole kinase from Chloroflexus aggregans (strain MD-66 / DSM 9485).